The primary structure comprises 153 residues: Aspartate carbamoyltransferase regulatory chain (153 aa).

Positions 109, 114, 138, and 141 each coordinate Zn(2+).

Belongs to the PyrI family. Contains catalytic and regulatory chains. Zn(2+) is required as a cofactor.

In terms of biological role, involved in allosteric regulation of aspartate carbamoyltransferase. This chain is Aspartate carbamoyltransferase regulatory chain, found in Salmonella paratyphi A (strain ATCC 9150 / SARB42).